Here is a 21-residue protein sequence, read N- to C-terminus: Pedibin (21 aa).

The interval A1–E21 is disordered.

Functionally, morphogenetically active peptide. Active in foot development. This is Pedibin from Hydra vulgaris (Hydra).